Here is a 260-residue protein sequence, read N- to C-terminus: Na(+)-translocating NADH-quinone reductase subunit C (260 aa).

A helical transmembrane segment spans residues 12-32; sequence LLVIILLSLACSIIVAGSAVL. At T226 the chain carries FMN phosphoryl threonine.

This sequence belongs to the NqrC family. As to quaternary structure, composed of six subunits; NqrA, NqrB, NqrC, NqrD, NqrE and NqrF. FMN serves as cofactor.

The protein localises to the cell inner membrane. It catalyses the reaction a ubiquinone + n Na(+)(in) + NADH + H(+) = a ubiquinol + n Na(+)(out) + NAD(+). In terms of biological role, NQR complex catalyzes the reduction of ubiquinone-1 to ubiquinol by two successive reactions, coupled with the transport of Na(+) ions from the cytoplasm to the periplasm. NqrA to NqrE are probably involved in the second step, the conversion of ubisemiquinone to ubiquinol. The sequence is that of Na(+)-translocating NADH-quinone reductase subunit C from Pasteurella multocida (strain Pm70).